The primary structure comprises 431 residues: ATP-dependent protease ATPase subunit HslU (431 aa).

Residues Val18, 60–65, Asp244, Glu309, and Arg381 each bind ATP; that span reads GVGKTE.

Belongs to the ClpX chaperone family. HslU subfamily. In terms of assembly, a double ring-shaped homohexamer of HslV is capped on each side by a ring-shaped HslU homohexamer. The assembly of the HslU/HslV complex is dependent on binding of ATP.

It is found in the cytoplasm. ATPase subunit of a proteasome-like degradation complex; this subunit has chaperone activity. The binding of ATP and its subsequent hydrolysis by HslU are essential for unfolding of protein substrates subsequently hydrolyzed by HslV. HslU recognizes the N-terminal part of its protein substrates and unfolds these before they are guided to HslV for hydrolysis. The sequence is that of ATP-dependent protease ATPase subunit HslU from Caulobacter sp. (strain K31).